The chain runs to 562 residues: Arginine--tRNA ligase (562 aa).

The short motif at 121-131 (PNIAKPFSVGH) is the 'HIGH' region element.

The protein belongs to the class-I aminoacyl-tRNA synthetase family. In terms of assembly, monomer.

The protein localises to the cytoplasm. The catalysed reaction is tRNA(Arg) + L-arginine + ATP = L-arginyl-tRNA(Arg) + AMP + diphosphate. In Streptococcus suis (strain 98HAH33), this protein is Arginine--tRNA ligase.